A 159-amino-acid chain; its full sequence is ATP synthase subunit b (159 aa).

The helical transmembrane segment at 7–27 threads the bilayer; it reads TFVWTIINFLLLLVVLSYFLF.

Belongs to the ATPase B chain family. In terms of assembly, F-type ATPases have 2 components, F(1) - the catalytic core - and F(0) - the membrane proton channel. F(1) has five subunits: alpha(3), beta(3), gamma(1), delta(1), epsilon(1). F(0) has three main subunits: a(1), b(2) and c(10-14). The alpha and beta chains form an alternating ring which encloses part of the gamma chain. F(1) is attached to F(0) by a central stalk formed by the gamma and epsilon chains, while a peripheral stalk is formed by the delta and b chains.

It localises to the cell membrane. F(1)F(0) ATP synthase produces ATP from ADP in the presence of a proton or sodium gradient. F-type ATPases consist of two structural domains, F(1) containing the extramembraneous catalytic core and F(0) containing the membrane proton channel, linked together by a central stalk and a peripheral stalk. During catalysis, ATP synthesis in the catalytic domain of F(1) is coupled via a rotary mechanism of the central stalk subunits to proton translocation. In terms of biological role, component of the F(0) channel, it forms part of the peripheral stalk, linking F(1) to F(0). This chain is ATP synthase subunit b, found in Clostridium novyi (strain NT).